We begin with the raw amino-acid sequence, 428 residues long: Mitochondrial distribution and morphology protein 12 (428 aa).

One can recognise an SMP-LTD domain in the interval 1–387 (MSFDINWNQL…WPSWICIDMN (387 aa)). Disordered stretches follow at residues 75 to 168 (VMNE…APPL) and 387 to 428 (NDDD…EAGE). The segment covering 81–96 (NDSKDEHLKNHGDGIN) has biased composition (basic and acidic residues). Positions 106–133 (LDDEDEDDEDDDEDDEDEEEEDEDDYDD) are enriched in acidic residues. The segment covering 146 to 161 (LNFNENSTTPSANSFA) has biased composition (polar residues). Over residues 387 to 403 (NDDDDEEEEEEESEDND) the composition is skewed to acidic residues. Residues 412 to 428 (NDGKHGDGRTDETEAGE) are compositionally biased toward basic and acidic residues.

This sequence belongs to the MDM12 family. In terms of assembly, component of the ER-mitochondria encounter structure (ERMES) or MDM complex, composed of MMM1, MDM10, MDM12 and MDM34. An MMM1 homodimer associates with one molecule of MDM12 on each side in a pairwise head-to-tail manner, and the SMP-LTD domains of MMM1 and MDM12 generate a continuous hydrophobic tunnel for phospholipid trafficking.

It localises to the mitochondrion outer membrane. The protein localises to the endoplasmic reticulum membrane. Component of the ERMES/MDM complex, which serves as a molecular tether to connect the endoplasmic reticulum (ER) and mitochondria. Components of this complex are involved in the control of mitochondrial shape and protein biogenesis, and function in nonvesicular lipid trafficking between the ER and mitochondria. MDM12 is required for the interaction of the ER-resident membrane protein MMM1 and the outer mitochondrial membrane-resident beta-barrel protein MDM10. The MDM12-MMM1 subcomplex functions in the major beta-barrel assembly pathway that is responsible for biogenesis of all mitochondrial outer membrane beta-barrel proteins, and acts in a late step after the SAM complex. The MDM10-MDM12-MMM1 subcomplex further acts in the TOM40-specific pathway after the action of the MDM12-MMM1 complex. Essential for establishing and maintaining the structure of mitochondria and maintenance of mtDNA nucleoids. The protein is Mitochondrial distribution and morphology protein 12 of Candida albicans (strain SC5314 / ATCC MYA-2876) (Yeast).